The sequence spans 290 residues: MKSGFAAILGRPSTGKSTLLNSICGHKISIISPIPQTTRNNIKGIFTDDRGQIIFIDTPGFHLSKKKFNIAMMKNIHSSIGEVELILYIIDIQDKPGEEENKMLEIIKNSKIKFLVILNKIDLKNTKIKEITQFLKEKGIEDSNIIKISAEKKINTEELKNKIYENFSEGPLYYPQEYYTDQEINFRISEIIREKAIENLKEELPYSLYVDIDTLENKKGSLFIRANIFVANESQKGIIVGKNGKEIKSIGERARKTIAKIFETKCNLFLQVKLKKNWNKEDKLIKRLIN.

An Era-type G domain is found at 2-169 (KSGFAAILGR…KNKIYENFSE (168 aa)). The interval 10-17 (GRPSTGKS) is G1. 10–17 (GRPSTGKS) is a binding site for GTP. Residues 36–40 (QTTRN) are G2. A G3 region spans residues 57 to 60 (DTPG). Residues 57-61 (DTPGF) and 119-122 (NKID) contribute to the GTP site. Positions 119–122 (NKID) are G4. Residues 148-150 (ISA) form a G5 region. The region spanning 200–276 (LKEELPYSLY…NLFLQVKLKK (77 aa)) is the KH type-2 domain.

Belongs to the TRAFAC class TrmE-Era-EngA-EngB-Septin-like GTPase superfamily. Era GTPase family. As to quaternary structure, monomer.

It is found in the cytoplasm. It localises to the cell inner membrane. Its function is as follows. An essential GTPase that binds both GDP and GTP, with rapid nucleotide exchange. Plays a role in 16S rRNA processing and 30S ribosomal subunit biogenesis and possibly also in cell cycle regulation and energy metabolism. This chain is GTPase Era, found in Borreliella burgdorferi (strain ATCC 35210 / DSM 4680 / CIP 102532 / B31) (Borrelia burgdorferi).